A 47-amino-acid chain; its full sequence is Defensin-2 (47 aa).

4 disulfides stabilise this stretch: C3–C47, C14–C35, C20–C41, and C24–C43.

The protein belongs to the DEFL family. Epidermis and vascular bundles of pods, stems, roots, leaves and wet or dry seeds.

Its function is as follows. Possesses antifungal activity sensitive to inorganic cations. The chain is Defensin-2 from Pisum sativum (Garden pea).